We begin with the raw amino-acid sequence, 249 residues long: Segregation and condensation protein A (249 aa).

Belongs to the ScpA family. Component of a cohesin-like complex composed of ScpA, ScpB and the Smc homodimer, in which ScpA and ScpB bind to the head domain of Smc. The presence of the three proteins is required for the association of the complex with DNA.

It is found in the cytoplasm. Participates in chromosomal partition during cell division. May act via the formation of a condensin-like complex containing Smc and ScpB that pull DNA away from mid-cell into both cell halves. In Listeria innocua serovar 6a (strain ATCC BAA-680 / CLIP 11262), this protein is Segregation and condensation protein A.